We begin with the raw amino-acid sequence, 133 residues long: NADH dehydrogenase [ubiquinone] 1 alpha subcomplex subunit 6 (133 aa).

Belongs to the complex I LYR family. Complex I is composed of at least 49 different subunits.

It localises to the mitochondrion inner membrane. In terms of biological role, accessory subunit of the mitochondrial membrane respiratory chain NADH dehydrogenase (Complex I), that is believed to be not involved in catalysis. Complex I functions in the transfer of electrons from NADH to the respiratory chain. The immediate electron acceptor for the enzyme is believed to be ubiquinone. In Arabidopsis thaliana (Mouse-ear cress), this protein is NADH dehydrogenase [ubiquinone] 1 alpha subcomplex subunit 6.